We begin with the raw amino-acid sequence, 65 residues long: Large ribosomal subunit protein bL35 (65 aa).

This sequence belongs to the bacterial ribosomal protein bL35 family.

The sequence is that of Large ribosomal subunit protein bL35 from Yersinia pseudotuberculosis serotype O:1b (strain IP 31758).